A 338-amino-acid chain; its full sequence is Hydroxyproline O-galactosyltransferase HPGT1 (338 aa).

Topologically, residues 1–12 (MARKGSSIRLSS) are cytoplasmic. A helical; Signal-anchor for type II membrane protein membrane pass occupies residues 13-32 (SRISTLLLFMFATFASFYVA). The Lumenal portion of the chain corresponds to 33 to 338 (GRLWQESQTR…WSSEAICAGV (306 aa)).

Belongs to the glycosyltransferase 31 family. Mn(2+) is required as a cofactor. In terms of tissue distribution, expressed in roots, rosette leaves, cauline leaves, stems, flowers and siliques.

Its subcellular location is the golgi apparatus membrane. It functions in the pathway protein modification; protein glycosylation. In terms of biological role, possesses hydroxyproline O-galactosyltransferase activity. Transfers galactose from UDP-galactose to hydroxyproline residues in the arabinogalactan proteins (AGPs). Is specific for AGPs containing non-contiguous peptidyl hydroxyproline residues. The addition of galactose onto the peptidyl hydroxyproline residues in AGP core proteins represents the first committed step in arabinogalactan polysaccharide addition. AGP glycans play essential roles in both vegetative and reproductive plant growth. The sequence is that of Hydroxyproline O-galactosyltransferase HPGT1 from Arabidopsis thaliana (Mouse-ear cress).